We begin with the raw amino-acid sequence, 1321 residues long: Multidrug resistance protein pgp-1 (1321 aa).

Residues 1 to 77 (MLRNGSLRQS…YTTTLEKLLL (77 aa)) are Cytoplasmic-facing. The region spanning 77–381 (LFIGTLVAVI…AGPQLAVLGT (305 aa)) is the ABC transmembrane type-1 1 domain. The chain crosses the membrane as a helical span at residues 78–98 (FIGTLVAVITGAGLPLMSILQ). N115 and N125 each carry an N-linked (GlcNAc...) asparagine glycan. Residues 144-164 (AMTVGMWAAGQITVTCYLYVA) form a helical membrane-spanning segment. N-linked (GlcNAc...) asparagine glycosylation is present at N190. A run of 4 helical transmembrane segments spans residues 213–233 (KIGMAFQYLSQFITGFIVAFT), 240–260 (LVMLAVTPIQALCGFAIAKSM), 321–341 (ISFGAMQASNFISFALAFYIG), and 350–370 (LNFGDMLTTFSSVMMGSMALG). Residues 371–753 (LAGPQLAVLG…LYHARPHALS (383 aa)) are Cytoplasmic-facing. The region spanning 416–652 (ITVENVHFTY…QGLYYDLVTA (237 aa)) is the ABC transporter 1 domain. 451–458 (GSSGCGKS) contacts ATP. 2 consecutive transmembrane segments (helical) span residues 754-774 (LFIGMSTATIGGFIYPTYSVF) and 798-818 (LMFLVLAAAQGICSFLMTFFM). In terms of domain architecture, ABC transmembrane type-1 2 spans 754–1043 (LFIGMSTATI…ATSYFPEYAK (290 aa)). N-linked (GlcNAc...) asparagine glycosylation is present at N850. The next 4 membrane-spanning stretches (helical) occupy residues 874–894 (FSTVITTLVSMVAGIGLAFFY), 895–915 (GWQMALLIIAILPIVAFGQYL), 978–998 (IQGLSYGCASSVLYLLNTCAY), and 1017–1037 (VLRVMYAITISTSTLGFATSY). The Cytoplasmic segment spans residues 1038-1321 (FPEYAKATFA…LTQKQMTEKK (284 aa)). One can recognise an ABC transporter 2 domain in the interval 1077–1315 (VIFKNVRFAY…KGAYYKLTQK (239 aa)). Position 1112–1119 (1112–1119 (GPSGCGKS)) interacts with ATP.

This sequence belongs to the ABC transporter superfamily. ABCB family. Multidrug resistance exporter (TC 3.A.1.201) subfamily. Intestinal cells.

It localises to the membrane. The catalysed reaction is ATP + H2O + xenobioticSide 1 = ADP + phosphate + xenobioticSide 2.. Its function is as follows. Energy-dependent efflux pump responsible for decreased drug accumulation in multidrug-resistant cells. The polypeptide is Multidrug resistance protein pgp-1 (pgp-1) (Caenorhabditis elegans).